Reading from the N-terminus, the 490-residue chain is E3 ubiquitin-protein ligase Hakai (490 aa).

Positions 34 to 60 (QANKAKPAPRTQRTINRMPAKAPPGDE) are disordered. The RING-type zinc-finger motif lies at 108–148 (CDKCGLPIKIYGRMIPCKHVFCYDCAILHEKKGDKMCPGCS). The interval 147 to 205 (CSDPVQRIEQCTRGSLFMCSIVQGCKRTYLSQRDLQAHINHRHMRAGKPVTRASLENVH) is HYB domain. The C2H2-type zinc finger occupies 163–189 (FMCSIVQGCKRTYLSQRDLQAHINHRH). A phosphoserine mark is found at Ser-200, Ser-284, and Ser-289. The segment at 254 to 490 (QPHEDIRAPP…DQTRYRPYYQ (237 aa)) is disordered. Pro residues-rich tracts occupy residues 341 to 358 (APPP…PHPP), 371 to 388 (APPP…PPPG), and 398 to 422 (MNHP…PPHH). Residues 426-441 (NSLPQFTEDQGTLSPP) show a composition bias toward polar residues. Residues 456-477 (PRGPPPPPRLQGPPSQTPLPGP) show a composition bias toward pro residues.

Belongs to the Hakai family. Homodimer. Interacts with tyrosine-phosphorylated SRC substrates. Component of the WMM complex, a N6-methyltransferase complex composed of a catalytic subcomplex, named MAC, and of an associated subcomplex, named MACOM. The MAC subcomplex is composed of METTL3 and METTL14. The MACOM subcomplex is composed of WTAP, ZC3H13, CBLL1/HAKAI, VIRMA, and, in some cases of RBM15 (RBM15 or RBM15B). Also a component of a MACOM-like complex, named WTAP complex, composed of WTAP, ZC3H13, CBLL1, VIRMA, RBM15, BCLAF1 and THRAP3. Post-translationally, phosphorylated on tyrosine residues.

The protein resides in the nucleus speckle. The protein localises to the nucleus. It localises to the nucleoplasm. Its subcellular location is the cytoplasm. It catalyses the reaction S-ubiquitinyl-[E2 ubiquitin-conjugating enzyme]-L-cysteine + [acceptor protein]-L-lysine = [E2 ubiquitin-conjugating enzyme]-L-cysteine + N(6)-ubiquitinyl-[acceptor protein]-L-lysine.. Its pathway is protein modification; protein ubiquitination. In terms of biological role, E3 ubiquitin-protein ligase that mediates ubiquitination of several tyrosine-phosphorylated Src substrates, including CDH1, CTTN and DOK1. Targets CDH1 for endocytosis and degradation. Associated component of the WMM complex, a complex that mediates N6-methyladenosine (m6A) methylation of RNAs, a modification that plays a role in the efficiency of mRNA splicing and RNA processing. Its function in the WMM complex is unknown. This is E3 ubiquitin-protein ligase Hakai from Macaca fascicularis (Crab-eating macaque).